The sequence spans 360 residues: Phosphoserine aminotransferase (360 aa).

Arginine 41 provides a ligand contact to L-glutamate. Positions 101, 152, 172, and 195 each coordinate pyridoxal 5'-phosphate. Lysine 196 bears the N6-(pyridoxal phosphate)lysine mark. 237–238 (NT) is a pyridoxal 5'-phosphate binding site.

This sequence belongs to the class-V pyridoxal-phosphate-dependent aminotransferase family. SerC subfamily. Homodimer. It depends on pyridoxal 5'-phosphate as a cofactor.

The protein localises to the cytoplasm. It carries out the reaction O-phospho-L-serine + 2-oxoglutarate = 3-phosphooxypyruvate + L-glutamate. It catalyses the reaction 4-(phosphooxy)-L-threonine + 2-oxoglutarate = (R)-3-hydroxy-2-oxo-4-phosphooxybutanoate + L-glutamate. The protein operates within amino-acid biosynthesis; L-serine biosynthesis; L-serine from 3-phospho-D-glycerate: step 2/3. It participates in cofactor biosynthesis; pyridoxine 5'-phosphate biosynthesis; pyridoxine 5'-phosphate from D-erythrose 4-phosphate: step 3/5. Functionally, catalyzes the reversible conversion of 3-phosphohydroxypyruvate to phosphoserine and of 3-hydroxy-2-oxo-4-phosphonooxybutanoate to phosphohydroxythreonine. In Burkholderia orbicola (strain MC0-3), this protein is Phosphoserine aminotransferase.